The primary structure comprises 452 residues: tRNA modification GTPase MnmE (452 aa).

Arg21, Glu82, and Arg121 together coordinate (6S)-5-formyl-5,6,7,8-tetrahydrofolate. Positions 214 to 372 constitute a TrmE-type G domain; sequence GARVVLVGRP…LAKTIATTLL (159 aa). Asn224 serves as a coordination point for K(+). Residues 224-229, 243-249, 268-271, and 353-355 contribute to the GTP site; these read NVGKSS, TPIPGTT, DTAG, and SAR. Ser228 is a binding site for Mg(2+). K(+)-binding residues include Thr243, Ile245, and Thr248. Thr249 serves as a coordination point for Mg(2+). Lys452 contacts (6S)-5-formyl-5,6,7,8-tetrahydrofolate.

This sequence belongs to the TRAFAC class TrmE-Era-EngA-EngB-Septin-like GTPase superfamily. TrmE GTPase family. In terms of assembly, homodimer. Heterotetramer of two MnmE and two MnmG subunits. It depends on K(+) as a cofactor.

It localises to the cytoplasm. In terms of biological role, exhibits a very high intrinsic GTPase hydrolysis rate. Involved in the addition of a carboxymethylaminomethyl (cmnm) group at the wobble position (U34) of certain tRNAs, forming tRNA-cmnm(5)s(2)U34. The protein is tRNA modification GTPase MnmE of Chloroflexus aurantiacus (strain ATCC 29366 / DSM 635 / J-10-fl).